Here is an 801-residue protein sequence, read N- to C-terminus: Cadherin-20 (801 aa).

The N-terminal stretch at 1 to 34 is a signal peptide; the sequence is MWTTGRMSNAKSWLGLGTSLYFWALMDLTATVLS. The propeptide occupies 35 to 59; it reads STPMPEVELETLFSGRSQSHQRSKR. Over 60–619 the chain is Extracellular; the sequence is SWVWNQFFVL…AYLLPVSLSR (560 aa). Cadherin domains are found at residues 61-165, 166-274, 275-389, 390-494, and 494-610; these read WVWN…EPKF, LDGP…PPRF, PQKH…PPVF, EPGF…APEF, and FPRF…SPEA. Asn-261 carries an N-linked (GlcNAc...) asparagine glycan. 3 N-linked (GlcNAc...) asparagine glycosylation sites follow: Asn-420, Asn-461, and Asn-542. The chain crosses the membrane as a helical span at residues 620–640; that stretch reads GALIAILACIFVLLVLVLLIL. Over 641 to 801 the chain is Cytoplasmic; the sequence is SMRRHRKQPY…GASEGPAPLW (161 aa).

In terms of tissue distribution, expressed in brain. Highest level of expression in the retina. In embryo it is synthesized by the forebrain, anterior neural ridge, developing visual system, primitive external granular layer of the cerebellum and a subset of neural crest cells likely to develop into melanoblasts.

The protein localises to the cell membrane. Cadherins are calcium-dependent cell adhesion proteins. They preferentially interact with themselves in a homophilic manner in connecting cells; cadherins may thus contribute to the sorting of heterogeneous cell types. In Mus musculus (Mouse), this protein is Cadherin-20 (Cdh20).